Reading from the N-terminus, the 427-residue chain is Septin-8 (427 aa).

Residues 39-305 enclose the Septin-type G domain; that stretch reads QGFCFNILCV…ELYRRCKLEE (267 aa). The segment at 49–56 is G1 motif; that stretch reads GETGIGKS. GTP contacts are provided by residues 49–56, G104, 185–193, G239, and R254; these read GETGIGKS and KADTISKSE. A G3 motif region spans residues 101–104; it reads DTVG. The G4 motif stretch occupies residues 184-187; it reads AKAD. A coiled-coil region spans residues 321 to 409; the sequence is QETYEAKRKE…KAAMEALQSQ (89 aa). The segment at 373–427 is disordered; that stretch reads RVHQEESKKVEDKRRDLEEEMNSFNRRKAAMEALQSQSFQATSQQPLKKDKDRKN. A compositionally biased stretch (basic and acidic residues) spans 374 to 389; it reads VHQEESKKVEDKRRDL. A compositionally biased stretch (polar residues) spans 406–418; sequence LQSQSFQATSQQP.

The protein belongs to the TRAFAC class TrmE-Era-EngA-EngB-Septin-like GTPase superfamily. Septin GTPase family.

It localises to the cytoplasm. The protein localises to the cytoskeleton. The protein resides in the synapse. It is found in the cell projection. Its subcellular location is the axon. It localises to the cytoplasmic vesicle. The protein localises to the secretory vesicle. The protein resides in the synaptic vesicle membrane. It is found in the presynapse. The protein is Septin-8 of Xenopus tropicalis (Western clawed frog).